Reading from the N-terminus, the 624-residue chain is Chaperone protein HtpG (624 aa).

The tract at residues 1-336 (MKGQETRGFQ…SNDLPLNVSR (336 aa)) is a; substrate-binding. The tract at residues 337–552 (EILQDSTVTR…ADEMGTQMAK (216 aa)) is b. Residues 553–624 (LFAAAGQAMP…IKRVNALLLG (72 aa)) are c.

Belongs to the heat shock protein 90 family. As to quaternary structure, homodimer.

Its subcellular location is the cytoplasm. Molecular chaperone. Has ATPase activity. This is Chaperone protein HtpG from Enterobacter sp. (strain 638).